The sequence spans 303 residues: Elongation factor Ts (303 aa).

The segment at 82–85 (TDFV) is involved in Mg(2+) ion dislocation from EF-Tu.

The protein belongs to the EF-Ts family.

The protein resides in the cytoplasm. Functionally, associates with the EF-Tu.GDP complex and induces the exchange of GDP to GTP. It remains bound to the aminoacyl-tRNA.EF-Tu.GTP complex up to the GTP hydrolysis stage on the ribosome. This chain is Elongation factor Ts, found in Clostridioides difficile (strain 630) (Peptoclostridium difficile).